The following is a 518-amino-acid chain: Glutamate--cysteine ligase (518 aa).

The protein belongs to the glutamate--cysteine ligase type 1 family. Type 1 subfamily.

The catalysed reaction is L-cysteine + L-glutamate + ATP = gamma-L-glutamyl-L-cysteine + ADP + phosphate + H(+). The protein operates within sulfur metabolism; glutathione biosynthesis; glutathione from L-cysteine and L-glutamate: step 1/2. This chain is Glutamate--cysteine ligase, found in Citrobacter koseri (strain ATCC BAA-895 / CDC 4225-83 / SGSC4696).